Reading from the N-terminus, the 215-residue chain is Probable transaldolase (215 aa).

The Schiff-base intermediate with substrate role is filled by Lys-83.

Belongs to the transaldolase family. Type 3B subfamily.

The protein localises to the cytoplasm. The enzyme catalyses D-sedoheptulose 7-phosphate + D-glyceraldehyde 3-phosphate = D-erythrose 4-phosphate + beta-D-fructose 6-phosphate. It participates in carbohydrate degradation; pentose phosphate pathway; D-glyceraldehyde 3-phosphate and beta-D-fructose 6-phosphate from D-ribose 5-phosphate and D-xylulose 5-phosphate (non-oxidative stage): step 2/3. Its function is as follows. Transaldolase is important for the balance of metabolites in the pentose-phosphate pathway. In Methanococcus maripaludis (strain C6 / ATCC BAA-1332), this protein is Probable transaldolase.